The chain runs to 463 residues: Increased DNA methylation 3 (463 aa).

The span at 169–182 (NLDESRETEQDCSR) shows a compositional bias: basic and acidic residues. 2 disordered regions span residues 169–199 (NLDESRETEQDCSRNGDATANGVVTNEDYNS) and 300–347 (RRFK…TTGT). Residues 184 to 199 (GDATANGVVTNEDYNS) show a composition bias toward polar residues. Positions 300-310 (RRFKNSSKKAT) are enriched in basic residues.

In terms of assembly, interacts with MBD7 (via C-terminus), IDM1 and IDM2. Part of a complex made of MBD7, IDM1, IDM2 and IDM3.

It is found in the nucleus. Its function is as follows. Acts as an anti-silencing factor that prevents DNA hypermethylation and gene repression. This chain is Increased DNA methylation 3, found in Arabidopsis thaliana (Mouse-ear cress).